We begin with the raw amino-acid sequence, 229 residues long: Potassium/proton antiporter CemA (229 aa).

Transmembrane regions (helical) follow at residues 7–27 (FTPL…SLLF), 107–127 (ILHF…SILG), and 189–209 (IISG…KYWI).

It belongs to the CemA family.

The protein resides in the plastid. It is found in the chloroplast inner membrane. It catalyses the reaction K(+)(in) + H(+)(out) = K(+)(out) + H(+)(in). Functionally, contributes to K(+)/H(+) antiport activity by supporting proton efflux to control proton extrusion and homeostasis in chloroplasts in a light-dependent manner to modulate photosynthesis. Prevents excessive induction of non-photochemical quenching (NPQ) under continuous-light conditions. Indirectly promotes efficient inorganic carbon uptake into chloroplasts. This chain is Potassium/proton antiporter CemA, found in Helianthus annuus (Common sunflower).